A 428-amino-acid chain; its full sequence is Light-independent protochlorophyllide reductase subunit N (428 aa).

Positions 31, 56, and 117 each coordinate [4Fe-4S] cluster.

This sequence belongs to the BchN/ChlN family. Protochlorophyllide reductase is composed of three subunits; BchL, BchN and BchB. Forms a heterotetramer of two BchB and two BchN subunits. It depends on [4Fe-4S] cluster as a cofactor.

It carries out the reaction chlorophyllide a + oxidized 2[4Fe-4S]-[ferredoxin] + 2 ADP + 2 phosphate = protochlorophyllide a + reduced 2[4Fe-4S]-[ferredoxin] + 2 ATP + 2 H2O. Its pathway is porphyrin-containing compound metabolism; bacteriochlorophyll biosynthesis (light-independent). Its function is as follows. Component of the dark-operative protochlorophyllide reductase (DPOR) that uses Mg-ATP and reduced ferredoxin to reduce ring D of protochlorophyllide (Pchlide) to form chlorophyllide a (Chlide). This reaction is light-independent. The NB-protein (BchN-BchB) is the catalytic component of the complex. The chain is Light-independent protochlorophyllide reductase subunit N from Rhodopseudomonas palustris (strain HaA2).